Reading from the N-terminus, the 207-residue chain is NADH-ubiquinone oxidoreductase chain 6 (207 aa).

Helical transmembrane passes span 15–35 (ILLD…ILVS), 40–60 (SILY…LIGI), 66–86 (LYIL…LSLF), 116–136 (LFIL…NNIY), and 184–204 (ILLI…IVLT).

This sequence belongs to the complex I subunit 6 family.

Its subcellular location is the mitochondrion membrane. It catalyses the reaction a ubiquinone + NADH + 5 H(+)(in) = a ubiquinol + NAD(+) + 4 H(+)(out). Functionally, core subunit of the mitochondrial membrane respiratory chain NADH dehydrogenase (Complex I) that is believed to belong to the minimal assembly required for catalysis. Complex I functions in the transfer of electrons from NADH to the respiratory chain. The immediate electron acceptor for the enzyme is believed to be ubiquinone. The polypeptide is NADH-ubiquinone oxidoreductase chain 6 (ND6) (Wickerhamomyces canadensis (Yeast)).